The sequence spans 388 residues: Ribosomal RNA large subunit methyltransferase F (388 aa).

Residues 1 to 22 show a composition bias toward polar residues; that stretch reads MKTNNHNAKQAQTKTAKSNPSK. A disordered region spans residues 1 to 51; it reads MKTNNHNAKQAQTKTAKSNPSKEVTKIKPKRVKNKPTAKAAKSTGLKTNAA. Over residues 27–36 the composition is skewed to basic residues; it reads IKPKRVKNKP.

The protein belongs to the methyltransferase superfamily. METTL16/RlmF family.

The protein resides in the cytoplasm. It catalyses the reaction adenosine(1618) in 23S rRNA + S-adenosyl-L-methionine = N(6)-methyladenosine(1618) in 23S rRNA + S-adenosyl-L-homocysteine + H(+). Its function is as follows. Specifically methylates the adenine in position 1618 of 23S rRNA. This is Ribosomal RNA large subunit methyltransferase F from Vibrio campbellii (strain ATCC BAA-1116).